The sequence spans 456 residues: tRNA-2-methylthio-N(6)-dimethylallyladenosine synthase (456 aa).

The region spanning 1 to 116 (MTYFFETYGC…FESIFQEIEQ (116 aa)) is the MTTase N-terminal domain. [4Fe-4S] cluster is bound by residues cysteine 10, cysteine 46, cysteine 79, cysteine 162, cysteine 166, and cysteine 169. The region spanning 148–384 (SEGSFQSFIP…IALQMSTTLK (237 aa)) is the Radical SAM core domain. The 66-residue stretch at 387–452 (RARVGKTLPV…GRTLRAHLVQ (66 aa)) folds into the TRAM domain.

The protein belongs to the methylthiotransferase family. MiaB subfamily. In terms of assembly, monomer. [4Fe-4S] cluster serves as cofactor.

Its subcellular location is the cytoplasm. It carries out the reaction N(6)-dimethylallyladenosine(37) in tRNA + (sulfur carrier)-SH + AH2 + 2 S-adenosyl-L-methionine = 2-methylsulfanyl-N(6)-dimethylallyladenosine(37) in tRNA + (sulfur carrier)-H + 5'-deoxyadenosine + L-methionine + A + S-adenosyl-L-homocysteine + 2 H(+). Its function is as follows. Catalyzes the methylthiolation of N6-(dimethylallyl)adenosine (i(6)A), leading to the formation of 2-methylthio-N6-(dimethylallyl)adenosine (ms(2)i(6)A) at position 37 in tRNAs that read codons beginning with uridine. The chain is tRNA-2-methylthio-N(6)-dimethylallyladenosine synthase from Treponema pallidum (strain Nichols).